We begin with the raw amino-acid sequence, 201 residues long: Sorting nexin-10 (201 aa).

The segment at 8–125 is required for interaction with ATP6V1D; it reads EEFVSVWVRD…SLHLFLQSHL (118 aa). The region spanning 10 to 127 is the PX domain; it reads FVSVWVRDPR…HLFLQSHLNS (118 aa). The a 1,2-diacyl-sn-glycero-3-phospho-(1D-myo-inositol-3-phosphate) site is built by R53, K79, and R94. A disordered region spans residues 156 to 201; the sequence is FPEEDEEGKKENDIDYDSESSSSGLGHSSDDSSSHGCKVNTAPQES.

It belongs to the sorting nexin family. Interacts with ATP6V1D; may play a role in ciliogenesis.

Its subcellular location is the cytoplasm. It localises to the endosome membrane. The protein localises to the cytoskeleton. It is found in the microtubule organizing center. The protein resides in the centrosome. In terms of biological role, probable phosphoinositide-binding protein involved in protein sorting and membrane trafficking in endosomes. Plays a role in cilium biogenesis through regulation of the transport and the localization of proteins to the cilium. Required for the localization to the cilium of V-ATPase subunit ATP6V1D and ATP6V0D1, and RAB8A. Involved in osteoclast differentiation and therefore bone resorption. The sequence is that of Sorting nexin-10 (SNX10) from Homo sapiens (Human).